The sequence spans 156 residues: UPF0523 protein C (156 aa).

This sequence belongs to the UPF0523 family.

The protein is UPF0523 protein C of Dictyostelium discoideum (Social amoeba).